Reading from the N-terminus, the 243-residue chain is Uridylate kinase (243 aa).

An ATP-binding site is contributed by 15–18; that stretch reads KLSG. Residues 23-28 form an involved in allosteric activation by GTP region; sequence GEEGFG. G57 is a UMP binding site. 2 residues coordinate ATP: G58 and R62. UMP contacts are provided by residues D77 and 138-145; that span reads TGNPFCTT. Residues T165, Y171, and D174 each contribute to the ATP site.

The protein belongs to the UMP kinase family. Homohexamer.

It is found in the cytoplasm. The catalysed reaction is UMP + ATP = UDP + ADP. It functions in the pathway pyrimidine metabolism; CTP biosynthesis via de novo pathway; UDP from UMP (UMPK route): step 1/1. With respect to regulation, allosterically activated by GTP. Inhibited by UTP. Functionally, catalyzes the reversible phosphorylation of UMP to UDP. The sequence is that of Uridylate kinase from Shewanella denitrificans (strain OS217 / ATCC BAA-1090 / DSM 15013).